A 120-amino-acid polypeptide reads, in one-letter code: NAD(P)H-quinone oxidoreductase subunit 3, chloroplastic (120 aa).

The next 3 helical transmembrane spans lie at 9–29, 64–84, and 88–108; these read IFWA…TISG, MFAL…PWAM, and VLGI…IVGS.

This sequence belongs to the complex I subunit 3 family. NDH is composed of at least 16 different subunits, 5 of which are encoded in the nucleus.

It is found in the plastid. It localises to the chloroplast thylakoid membrane. The catalysed reaction is a plastoquinone + NADH + (n+1) H(+)(in) = a plastoquinol + NAD(+) + n H(+)(out). It carries out the reaction a plastoquinone + NADPH + (n+1) H(+)(in) = a plastoquinol + NADP(+) + n H(+)(out). Its function is as follows. NDH shuttles electrons from NAD(P)H:plastoquinone, via FMN and iron-sulfur (Fe-S) centers, to quinones in the photosynthetic chain and possibly in a chloroplast respiratory chain. The immediate electron acceptor for the enzyme in this species is believed to be plastoquinone. Couples the redox reaction to proton translocation, and thus conserves the redox energy in a proton gradient. This is NAD(P)H-quinone oxidoreductase subunit 3, chloroplastic from Lotus japonicus (Lotus corniculatus var. japonicus).